A 244-amino-acid chain; its full sequence is Methanethiol S-methyltransferase (244 aa).

Transmembrane regions (helical) follow at residues I7 to F27, I41 to V61, L90 to I110, V120 to I140, and G181 to I201.

This sequence belongs to the nurim family.

The protein resides in the membrane. The catalysed reaction is methanethiol + S-adenosyl-L-methionine = dimethyl sulfide + S-adenosyl-L-homocysteine + H(+). Its function is as follows. Catalyzes the methylation of methanethiol (MeSH) to yield dimethylsulphide (DMS). The sequence is that of Methanethiol S-methyltransferase from Mycobacterium tuberculosis (strain ATCC 25618 / H37Rv).